We begin with the raw amino-acid sequence, 1375 residues long: DNA-directed RNA polymerase subunit beta (1375 aa).

It belongs to the RNA polymerase beta chain family. As to quaternary structure, the RNAP catalytic core consists of 2 alpha, 1 beta, 1 beta' and 1 omega subunit. When a sigma factor is associated with the core the holoenzyme is formed, which can initiate transcription.

It catalyses the reaction RNA(n) + a ribonucleoside 5'-triphosphate = RNA(n+1) + diphosphate. DNA-dependent RNA polymerase catalyzes the transcription of DNA into RNA using the four ribonucleoside triphosphates as substrates. The sequence is that of DNA-directed RNA polymerase subunit beta from Oleidesulfovibrio alaskensis (strain ATCC BAA-1058 / DSM 17464 / G20) (Desulfovibrio alaskensis).